A 321-amino-acid chain; its full sequence is Protoheme IX farnesyltransferase (321 aa).

Transmembrane regions (helical) follow at residues 28–48, 49–69, 94–114, 116–136, 149–169, 176–196, 222–242, 247–267, 277–297, and 300–320; these read VMSLVIFTALAGMLIAPDPVH, PIVGFASLLAIAVGAGASGAL, VMPNEALAFGLTLSFLSVFTL, IVANWLAAGFLAFTIFFYVVI, IVIGGAAGAFPPMVGYAAATG, FILFAIIFIWTPPHFWALALG, ILLYTLLLAPLGVAPWLLGFA, GMLSIALGAAMLFFAARVYIV, AKALFGFSILYLFLLFAEIVV, and LVPIVVAMGAWLTSGMFPGFF.

This sequence belongs to the UbiA prenyltransferase family. Protoheme IX farnesyltransferase subfamily.

It localises to the cell inner membrane. The enzyme catalyses heme b + (2E,6E)-farnesyl diphosphate + H2O = Fe(II)-heme o + diphosphate. Its pathway is porphyrin-containing compound metabolism; heme O biosynthesis; heme O from protoheme: step 1/1. In terms of biological role, converts heme B (protoheme IX) to heme O by substitution of the vinyl group on carbon 2 of heme B porphyrin ring with a hydroxyethyl farnesyl side group. This Beijerinckia indica subsp. indica (strain ATCC 9039 / DSM 1715 / NCIMB 8712) protein is Protoheme IX farnesyltransferase.